We begin with the raw amino-acid sequence, 192 residues long: Aminodeoxychorismate synthase component 2 (192 aa).

Positions 3 to 192 (SVLMIDNCDS…LANLIHRPCH (190 aa)) constitute a Glutamine amidotransferase type-1 domain. Active-site residues include cysteine 83, histidine 170, and glutamate 172.

Monomer. Heterodimer consisting of two non-identical subunits: a glutamine amidotransferase subunit (PabA) and a aminodeoxychorismate synthase subunit (PabB).

The catalysed reaction is chorismate + L-glutamine = 4-amino-4-deoxychorismate + L-glutamate. Its pathway is cofactor biosynthesis; tetrahydrofolate biosynthesis; 4-aminobenzoate from chorismate: step 1/2. Part of a heterodimeric complex that catalyzes the two-step biosynthesis of 4-amino-4-deoxychorismate (ADC), a precursor of p-aminobenzoate (PABA) and tetrahydrofolate. In the first step, a glutamine amidotransferase (PabA) generates ammonia as a substrate that, along with chorismate, is used in the second step, catalyzed by aminodeoxychorismate synthase (PabB) to produce ADC. PabA converts glutamine into glutamate only in the presence of stoichiometric amounts of PabB. The sequence is that of Aminodeoxychorismate synthase component 2 from Streptomyces lividans.